The following is a 321-amino-acid chain: ATP-dependent 6-phosphofructokinase (321 aa).

Gly11 contacts ATP. 21–25 (RAVVR) contacts ADP. Residues 72–73 (RC) and 102–105 (GDGS) each bind ATP. Asp103 is a binding site for Mg(2+). 126 to 128 (TID) is a substrate binding site. The active-site Proton acceptor is Asp128. ADP is bound at residue Arg155. Residues Arg163 and 170 to 172 (MGR) each bind substrate. ADP-binding positions include 186–188 (GAE), Arg212, and 214–216 (KLH). Residues Glu223, Arg245, and 251–254 (HIQR) each bind substrate.

Belongs to the phosphofructokinase type A (PFKA) family. ATP-dependent PFK group I subfamily. Prokaryotic clade 'B1' sub-subfamily. As to quaternary structure, homotetramer. Mg(2+) is required as a cofactor.

The protein localises to the cytoplasm. It catalyses the reaction beta-D-fructose 6-phosphate + ATP = beta-D-fructose 1,6-bisphosphate + ADP + H(+). It participates in carbohydrate degradation; glycolysis; D-glyceraldehyde 3-phosphate and glycerone phosphate from D-glucose: step 3/4. With respect to regulation, allosterically activated by ADP and other diphosphonucleosides, and allosterically inhibited by phosphoenolpyruvate. In terms of biological role, catalyzes the phosphorylation of D-fructose 6-phosphate to fructose 1,6-bisphosphate by ATP, the first committing step of glycolysis. This chain is ATP-dependent 6-phosphofructokinase, found in Thermoanaerobacter pseudethanolicus (strain ATCC 33223 / 39E) (Clostridium thermohydrosulfuricum).